Here is a 275-residue protein sequence, read N- to C-terminus: Putative ankyrin repeat protein L715 (275 aa).

ANK repeat units follow at residues 94–123 (NINY…DINY), 124–153 (NNGL…NTND), 155–183 (IFQL…SIDP), and 184–213 (IYST…SDST). Residues 253–275 (NQDESDVGDDAENDIENDIEDDN) form a disordered region. Positions 255 to 275 (DESDVGDDAENDIENDIEDDN) are enriched in acidic residues.

The sequence is that of Putative ankyrin repeat protein L715 from Acanthamoeba polyphaga mimivirus (APMV).